The sequence spans 250 residues: 5-oxoprolinase subunit A (250 aa).

The protein belongs to the LamB/PxpA family. Forms a complex composed of PxpA, PxpB and PxpC.

It catalyses the reaction 5-oxo-L-proline + ATP + 2 H2O = L-glutamate + ADP + phosphate + H(+). Its function is as follows. Catalyzes the cleavage of 5-oxoproline to form L-glutamate coupled to the hydrolysis of ATP to ADP and inorganic phosphate. In Thermus thermophilus (strain ATCC 27634 / DSM 579 / HB8), this protein is 5-oxoprolinase subunit A.